Reading from the N-terminus, the 126-residue chain is Apolipoprotein C-IV (126 aa).

The first 27 residues, 1–27 (MSLLRHRLQALPSLCLCVLVLACIGAC), serve as a signal peptide directing secretion.

Belongs to the apolipoprotein C4 family.

It localises to the secreted. In terms of biological role, may participate in lipoprotein metabolism. The polypeptide is Apolipoprotein C-IV (APOC4) (Aotus nancymaae (Ma's night monkey)).